The sequence spans 537 residues: Multidrug resistance protein Stp (537 aa).

Helical transmembrane passes span 6–26 (LLTL…ALIV), 46–66 (WVVA…ATLA), 77–97 (IGVS…SIAV), 104–124 (AQGL…SAAF), 136–156 (IWTA…GLLV), 163–183 (SIFY…LCYV), 200–220 (LLFI…PQIG), 223–243 (SVQT…FVWL), 262–282 (YALA…MLLL), 300–320 (LMIL…GHLV), 327–347 (VPIL…IFSE), 352–372 (ALVL…LTPI), 397–417 (AIGS…WLSA), and 478–498 (VALL…WRWF).

Belongs to the major facilitator superfamily. EmrB family.

It is found in the cell membrane. Its function is as follows. Contributes to spectinomycin and tetracycline resistance. The protein is Multidrug resistance protein Stp (stp) of Mycobacterium tuberculosis (strain ATCC 25618 / H37Rv).